The following is a 379-amino-acid chain: Adenylosuccinate synthetase (379 aa).

Residues 11–17 and 39–41 each bind GTP; these read GDEGKGK and GHT. Asp12 (proton acceptor) is an active-site residue. Mg(2+) contacts are provided by Asp12 and Gly39. IMP-binding positions include 12–15, 37–40, Thr127, Arg141, Gln223, Thr238, and Arg302; these read DEGK and NAGH. His40 serves as the catalytic Proton donor. 298-304 serves as a coordination point for substrate; that stretch reads TTTGRGR. GTP-binding positions include Arg304 and 330–332; that span reads KLD.

This sequence belongs to the adenylosuccinate synthetase family. Homodimer. Requires Mg(2+) as cofactor.

It localises to the cytoplasm. The enzyme catalyses IMP + L-aspartate + GTP = N(6)-(1,2-dicarboxyethyl)-AMP + GDP + phosphate + 2 H(+). The protein operates within purine metabolism; AMP biosynthesis via de novo pathway; AMP from IMP: step 1/2. Plays an important role in the de novo pathway of purine nucleotide biosynthesis. Catalyzes the first committed step in the biosynthesis of AMP from IMP. The polypeptide is Adenylosuccinate synthetase (Methanosarcina mazei (strain ATCC BAA-159 / DSM 3647 / Goe1 / Go1 / JCM 11833 / OCM 88) (Methanosarcina frisia)).